A 542-amino-acid chain; its full sequence is Putative DEAD-box ATP-dependent RNA helicase 43 (542 aa).

A Q motif motif is present at residues 97 to 125 (KNFMDMKFPSPLLRMLKDKGIMHPTPIQV). One can recognise a Helicase ATP-binding domain in the interval 128 to 312 (LPVVLSGRDM…TSALVKPVTV (185 aa)). 141–148 (AFTGSGKT) is a binding site for ATP. Positions 260-263 (DEAD) match the DEAD box motif. One can recognise a Helicase C-terminal domain in the interval 323–483 (DVIQEVEYVK…RIPPVLAELN (161 aa)). A CCHC-type zinc finger spans residues 499 to 516 (KGCAYCGGLGHRILQCPK).

The protein belongs to the DEAD box helicase family. DDX41 subfamily.

The enzyme catalyses ATP + H2O = ADP + phosphate + H(+). This is Putative DEAD-box ATP-dependent RNA helicase 43 (RH43) from Arabidopsis thaliana (Mouse-ear cress).